Consider the following 501-residue polypeptide: Lysine--tRNA ligase (501 aa).

Mg(2+) contacts are provided by glutamate 402 and glutamate 409.

It belongs to the class-II aminoacyl-tRNA synthetase family. Homodimer. Mg(2+) serves as cofactor.

It localises to the cytoplasm. It carries out the reaction tRNA(Lys) + L-lysine + ATP = L-lysyl-tRNA(Lys) + AMP + diphosphate. The polypeptide is Lysine--tRNA ligase (Helicobacter pylori (strain Shi470)).